A 186-amino-acid chain; its full sequence is Translation initiation factor IF-3 (186 aa).

A disordered region spans residues M1 to L20.

It belongs to the IF-3 family. In terms of assembly, monomer.

Its subcellular location is the cytoplasm. In terms of biological role, IF-3 binds to the 30S ribosomal subunit and shifts the equilibrium between 70S ribosomes and their 50S and 30S subunits in favor of the free subunits, thus enhancing the availability of 30S subunits on which protein synthesis initiation begins. The sequence is that of Translation initiation factor IF-3 from Borrelia duttonii (strain Ly).